A 392-amino-acid chain; its full sequence is Phosphoglycerate kinase (392 aa).

Substrate-binding positions include 21–23 (DMN), Arg36, 59–62 (HLGR), Arg114, and Arg147. ATP-binding positions include Lys198, Glu320, and 346 to 349 (GGDT).

Belongs to the phosphoglycerate kinase family. Monomer.

The protein resides in the cytoplasm. The catalysed reaction is (2R)-3-phosphoglycerate + ATP = (2R)-3-phospho-glyceroyl phosphate + ADP. Its pathway is carbohydrate degradation; glycolysis; pyruvate from D-glyceraldehyde 3-phosphate: step 2/5. The sequence is that of Phosphoglycerate kinase from Neisseria meningitidis serogroup A / serotype 4A (strain DSM 15465 / Z2491).